Reading from the N-terminus, the 230-residue chain is Small ribosomal subunit protein uS3 (230 aa).

The KH type-2 domain maps to 39 to 107; it reads VRNYLRQKLA…PVHVNIEEIR (69 aa). Residues 210–230 form a disordered region; sequence SSKPEHESKQRKAGRRNAAAN.

Belongs to the universal ribosomal protein uS3 family. In terms of assembly, part of the 30S ribosomal subunit. Forms a tight complex with proteins S10 and S14.

Functionally, binds the lower part of the 30S subunit head. Binds mRNA in the 70S ribosome, positioning it for translation. The polypeptide is Small ribosomal subunit protein uS3 (Neisseria meningitidis serogroup C (strain 053442)).